Reading from the N-terminus, the 208-residue chain is Ribosome maturation factor RimP (208 aa).

The disordered stretch occupies residues 165-208; the sequence is TAQPKKGQRQGKEPAKESGQKKQLAEAAPRSGSKRSERGSEKRK. 2 stretches are compositionally biased toward basic and acidic residues: residues 174 to 188 and 198 to 208; these read QGKE…KKQL and KRSERGSEKRK.

It belongs to the RimP family.

The protein resides in the cytoplasm. In terms of biological role, required for maturation of 30S ribosomal subunits. The sequence is that of Ribosome maturation factor RimP from Sorangium cellulosum (strain So ce56) (Polyangium cellulosum (strain So ce56)).